A 475-amino-acid polypeptide reads, in one-letter code: UDP-N-acetylmuramoylalanine--D-glutamate ligase (475 aa).

Position 130–136 (130–136 (GTNGKTT)) interacts with ATP.

Belongs to the MurCDEF family.

The protein localises to the cytoplasm. The enzyme catalyses UDP-N-acetyl-alpha-D-muramoyl-L-alanine + D-glutamate + ATP = UDP-N-acetyl-alpha-D-muramoyl-L-alanyl-D-glutamate + ADP + phosphate + H(+). The protein operates within cell wall biogenesis; peptidoglycan biosynthesis. Cell wall formation. Catalyzes the addition of glutamate to the nucleotide precursor UDP-N-acetylmuramoyl-L-alanine (UMA). The polypeptide is UDP-N-acetylmuramoylalanine--D-glutamate ligase (Corynebacterium efficiens (strain DSM 44549 / YS-314 / AJ 12310 / JCM 11189 / NBRC 100395)).